Consider the following 197-residue polypeptide: Carnitine operon protein CaiE (197 aa).

The interval 177–197 (TAPEANRPRLRGTTEVKPKGQ) is disordered. Positions 188–197 (GTTEVKPKGQ) are enriched in basic and acidic residues.

The protein belongs to the transferase hexapeptide repeat family.

It functions in the pathway amine and polyamine metabolism; carnitine metabolism. In terms of biological role, overproduction of CaiE stimulates the activity of CaiB and CaiD. This Proteus sp. (strain LE138) protein is Carnitine operon protein CaiE.